Reading from the N-terminus, the 770-residue chain is DNA ligase 1 (770 aa).

Positions 1–18 (MSTGEGTAEQTATGTPAQ) are enriched in low complexity. A disordered region spans residues 1–27 (MSTGEGTAEQTATGTPAQNGRESIPSD). Residues 57-61 (DAEFD), 106-107 (SL), and Glu142 contribute to the NAD(+) site. Residue Lys144 is the N6-AMP-lysine intermediate of the active site. Residues Arg165, Glu202, Lys318, and Lys342 each coordinate NAD(+). Zn(2+)-binding residues include Cys439, Cys442, Cys458, and Cys464. One can recognise a BRCT domain in the interval 657–746 (STPRTLEGLT…PAAVGDAAEA (90 aa)). Residues 741–770 (GDAAEADGGDAPEESAALQEEKAAAVEETA) form a disordered region. Positions 744–753 (AEADGGDAPE) are enriched in acidic residues. A compositionally biased stretch (basic and acidic residues) spans 759-770 (QEEKAAAVEETA).

This sequence belongs to the NAD-dependent DNA ligase family. LigA subfamily. Mg(2+) serves as cofactor. It depends on Mn(2+) as a cofactor.

The enzyme catalyses NAD(+) + (deoxyribonucleotide)n-3'-hydroxyl + 5'-phospho-(deoxyribonucleotide)m = (deoxyribonucleotide)n+m + AMP + beta-nicotinamide D-nucleotide.. Its function is as follows. DNA ligase that catalyzes the formation of phosphodiester linkages between 5'-phosphoryl and 3'-hydroxyl groups in double-stranded DNA using NAD as a coenzyme and as the energy source for the reaction. It is essential for DNA replication and repair of damaged DNA. This chain is DNA ligase 1, found in Pseudarthrobacter chlorophenolicus (strain ATCC 700700 / DSM 12829 / CIP 107037 / JCM 12360 / KCTC 9906 / NCIMB 13794 / A6) (Arthrobacter chlorophenolicus).